The primary structure comprises 386 residues: Putative F-box/kelch-repeat protein At4g11750 (386 aa).

The 47-residue stretch at 5–51 (PVDLPYIPDDLLLNCLARVSRLYYPILSLVSKRFRSLVASLELYEIR) folds into the F-box domain. Kelch repeat units follow at residues 187–236 (KIYV…VYDG), 238–285 (LYLF…YGRS), and 287–324 (VLMW…GYSG).

The sequence is that of Putative F-box/kelch-repeat protein At4g11750 from Arabidopsis thaliana (Mouse-ear cress).